The sequence spans 307 residues: Serine/threonine-protein phosphatase 4 catalytic subunit (307 aa).

The Mn(2+) site is built by D54, H56, D82, and N114. H115 serves as the catalytic Proton donor. Residues H164 and H238 each contribute to the Mn(2+) site. L307 bears the Leucine methyl ester mark.

The protein belongs to the PPP phosphatase family. PP-4 (PP-X) subfamily. In terms of assembly, serine/threonine-protein phosphatase 4 (PP4) occurs in different assemblies of the catalytic and one or more regulatory subunits. It depends on Mn(2+) as a cofactor.

The protein resides in the cytoplasm. The protein localises to the nucleus. It localises to the cytoskeleton. Its subcellular location is the microtubule organizing center. It is found in the centrosome. It carries out the reaction O-phospho-L-seryl-[protein] + H2O = L-seryl-[protein] + phosphate. The enzyme catalyses O-phospho-L-threonyl-[protein] + H2O = L-threonyl-[protein] + phosphate. Protein phosphatase that regulates many processes such as microtubule organization at centrosomes. The chain is Serine/threonine-protein phosphatase 4 catalytic subunit (ppp4c) from Xenopus laevis (African clawed frog).